The primary structure comprises 265 residues: MAEELKIVDNRSREDANLSPVNKIEIYSFFDPFNTDCFKLSAIISKLRIEYNQYIRIRHILNPSLKVLTKCQAQSTSDFDNIALAYKAAELQGRLRAERFIHLMQNEIIPKKDIITEEMICDCIINAGLDYNEFKEDLQKSKLTESLKIDLHIAREMEIEQAPSLVFFSEDVHEEGLKVEGLYPYHIYTYIINELMGTPIEKNLPPKIEHYIQKKQLVTTEELLTIYEWPEKLMTKELKKLALQQKVEKLQYPEGDFWQSKMPRI.

This sequence belongs to the SpxH family. Interacts with Spx.

It is found in the cytoplasm. Adapter protein required for efficient degradation of Spx by ClpXP under non-stress conditions. Interaction with Spx stabilizes Spx and exposes the C-terminus of Spx for recognition and proteolysis by ClpXP. The protein is ClpXP adapter protein SpxH of Staphylococcus haemolyticus (strain JCSC1435).